The primary structure comprises 265 residues: Urease accessory protein UreH (265 aa).

The protein belongs to the UreD family. As to quaternary structure, ureH, UreF and UreG form a complex that acts as a GTP-hydrolysis-dependent molecular chaperone, activating the urease apoprotein by helping to assemble the nickel containing metallocenter of UreC. The UreE protein probably delivers the nickel.

It localises to the cytoplasm. Required for maturation of urease via the functional incorporation of the urease nickel metallocenter. The sequence is that of Urease accessory protein UreH from Helicobacter pylori (strain J99 / ATCC 700824) (Campylobacter pylori J99).